The following is a 302-amino-acid chain: Succinate--CoA ligase [ADP-forming] subunit alpha (302 aa).

Residues 17–20 (TGST), Lys43, and 96–98 (ITE) contribute to the CoA site. Tyr159 serves as a coordination point for substrate. His247 acts as the Tele-phosphohistidine intermediate in catalysis.

It belongs to the succinate/malate CoA ligase alpha subunit family. As to quaternary structure, heterotetramer of two alpha and two beta subunits.

It carries out the reaction succinate + ATP + CoA = succinyl-CoA + ADP + phosphate. The enzyme catalyses GTP + succinate + CoA = succinyl-CoA + GDP + phosphate. It participates in carbohydrate metabolism; tricarboxylic acid cycle; succinate from succinyl-CoA (ligase route): step 1/1. In terms of biological role, succinyl-CoA synthetase functions in the citric acid cycle (TCA), coupling the hydrolysis of succinyl-CoA to the synthesis of either ATP or GTP and thus represents the only step of substrate-level phosphorylation in the TCA. The alpha subunit of the enzyme binds the substrates coenzyme A and phosphate, while succinate binding and nucleotide specificity is provided by the beta subunit. This Staphylococcus aureus (strain MRSA252) protein is Succinate--CoA ligase [ADP-forming] subunit alpha.